Reading from the N-terminus, the 793-residue chain is MNEKTLKILEFNKIIDKLVSLATSSLGKELAEKLVPDTDLNRVERAQKETSDAVAFIARRGTPPMGGIHDIRDSLKRVEIGAILNPGELLKTADVLRAVRNLKSYASNDRIKTDEDNIVSELIGCLESNKRIEDRIYMSILSEDEIADNASPTLANIRRQIRNAQESIKDKLNDIIRSSRYQKYIQEPIVTLRGDRYVIPVKQEYRTEIPGLIHDSSASGATIFIEPMAVVEANNHIRELKIKEQAEIEKILGELTGEIRGIVDSLKSNVSILGRLDFIFAKARLSLDYNCVCPVLNDEHKILIKKGRHPLLDKKTVVPIDFWIGEDFNTLVVTGPNTGGKTVTLKTVGLFTLMTQAGLHIPANEGTKMSIFKKVYADIGDEQSIEQSLSTFSSHMKNIVGILKDVDEDSLVLFDELGAGTDPTEGAALAMSILEYLRNKGSTTVATTHYSQLKAYAVTTKFVENACCEFNVETLRPTYRLLIGVPGKSNAFAISKRLGLFDDIIEKAKEFLTQDDIKFEDMLMSIEKNLNQSENEKMKAESYRLEAEKLKKELEEQKRKLAENRERLIQEARAEARKILLEARKEAEEIISKMRRLEQEVHNAQRQKEAEELRLKLKRKVDSIEETLELPLAPKNALVKPPENLKPGDSVLIVNLDQKGTVITPPDKDGEVVVQAGIMKINVHISNLKLVDEQKIVLNNSGIGKIGMSKAKSISTEIDVRGYNLEEAIESVDKYLDDAYLSGLTEVSIIHGKGTGVLRSGIQKFLKSDSRVKSFRLGKYGEGESGVTIVELR.

335-342 contacts ATP; the sequence is GPNTGGKT. Positions 718–793 constitute a Smr domain; sequence IDVRGYNLEE…ESGVTIVELR (76 aa).

Belongs to the DNA mismatch repair MutS family. MutS2 subfamily. In terms of assembly, homodimer. Binds to stalled ribosomes, contacting rRNA.

Functionally, endonuclease that is involved in the suppression of homologous recombination and thus may have a key role in the control of bacterial genetic diversity. In terms of biological role, acts as a ribosome collision sensor, splitting the ribosome into its 2 subunits. Detects stalled/collided 70S ribosomes which it binds and splits by an ATP-hydrolysis driven conformational change. Acts upstream of the ribosome quality control system (RQC), a ribosome-associated complex that mediates the extraction of incompletely synthesized nascent chains from stalled ribosomes and their subsequent degradation. Probably generates substrates for RQC. In Acetivibrio thermocellus (strain ATCC 27405 / DSM 1237 / JCM 9322 / NBRC 103400 / NCIMB 10682 / NRRL B-4536 / VPI 7372) (Clostridium thermocellum), this protein is Endonuclease MutS2.